A 242-amino-acid polypeptide reads, in one-letter code: GATA zinc finger domain-containing protein 1 (242 aa).

The GATA-type zinc finger occupies 9–33 (CAVCKTQSSSMWKKGNQGEILCNGC). The segment at 44 to 85 (GASASSTIQQNNGGGKQSKQEIHRRSARLRSTKYKAPASEKK) is disordered. The segment covering 45–54 (ASASSTIQQN) has biased composition (low complexity).

Its subcellular location is the nucleus. Component of some chromatin complex recruited to chromatin sites methylated 'Lys-4' of histone H3 (H3K4me), with a preference for trimethylated form (H3K4me3). The polypeptide is GATA zinc finger domain-containing protein 1 (gatad1) (Danio rerio (Zebrafish)).